Here is a 109-residue protein sequence, read N- to C-terminus: Small ribosomal subunit protein bS20 (109 aa).

This sequence belongs to the bacterial ribosomal protein bS20 family.

Functionally, binds directly to 16S ribosomal RNA. The protein is Small ribosomal subunit protein bS20 of Synechococcus sp. (strain JA-2-3B'a(2-13)) (Cyanobacteria bacterium Yellowstone B-Prime).